Consider the following 656-residue polypeptide: FAST kinase domain-containing protein 3, mitochondrial (656 aa).

Residues 587–645 (VALCIDGPQRFCLGSKHLLGKEAIKQRHLRLLGYQVVQVPYHELELLTSRLELVDYLQR) form the RAP domain.

The protein belongs to the FAST kinase family.

Its subcellular location is the mitochondrion. Required for normal mitochondrial respiration. Increases steady-state levels and half-lives of a subset of mature mitochondrial mRNAs MT-ND2, MT-ND3, MT-CYTB, MT-CO2, and MT-ATP8/6. Promotes MT-CO1 mRNA translation and increases mitochondrial complex IV assembly and activity. The sequence is that of FAST kinase domain-containing protein 3, mitochondrial (Fastkd3) from Rattus norvegicus (Rat).